The primary structure comprises 835 residues: Ribonuclease R (835 aa).

Residues 267-593 (RVDLRELPLV…LLHRAIKYLI (327 aa)) form the RNB domain. Positions 652 to 733 (GDELEGVIAN…DDKQIDFELV (82 aa)) constitute an S1 motif domain. The segment covering 739 to 754 (LRGEGKTAKKRAAEAK) has biased composition (basic and acidic residues). The disordered stretch occupies residues 739-835 (LRGEGKTAKK…KTKRTKQDAQ (97 aa)). Residues 755–764 (RKAKEKKRAA) show a composition bias toward basic residues. Positions 765–777 (TRSSSKESATARA) are enriched in low complexity. The segment covering 783-793 (PTKRPEQTDSG) has biased composition (basic and acidic residues). Positions 809-829 (KPKVKKAHKKKPHSKPKKTKR) are enriched in basic residues.

It belongs to the RNR ribonuclease family. RNase R subfamily.

It is found in the cytoplasm. It carries out the reaction Exonucleolytic cleavage in the 3'- to 5'-direction to yield nucleoside 5'-phosphates.. In terms of biological role, 3'-5' exoribonuclease that releases 5'-nucleoside monophosphates and is involved in maturation of structured RNAs. This Vibrio parahaemolyticus serotype O3:K6 (strain RIMD 2210633) protein is Ribonuclease R.